We begin with the raw amino-acid sequence, 157 residues long: Protein snakeskin (157 aa).

Residues 2-6 (VSVQT) lie on the Cytoplasmic side of the membrane. Residues 7-27 (IATIVVKTFKIVLNIIILVLY) form a helical membrane-spanning segment. Topologically, residues 28–53 (RTGYNGEFLGVGGTWNLNEEKNPDAE) are extracellular. The chain crosses the membrane as a helical span at residues 54–74 (IVASGVIVGYLIYTLVQIVTF). Residues 75 to 87 (LFGTTEHKRALSE) lie on the Cytoplasmic side of the membrane. Residues 88–108 (IVMNFVGVFLWIAVGAVALHY) traverse the membrane as a helical segment. Residues 109–130 (WGGYQGEHQFQFVFAEKQVGLA) are Extracellular-facing. The chain crosses the membrane as a helical span at residues 131–151 (VGALCVINGAIYLLDTALSVI). Residues 152–157 (HFTKEM) are Cytoplasmic-facing.

Expressed in midgut epithelium (at protein level).

Its subcellular location is the apicolateral cell membrane. It is found in the cell junction. It localises to the septate junction. Functionally, required for assembly of smooth septate junctions (sSJs). May be important for barrier function of the midgut epithelium. In Bombyx mori (Silk moth), this protein is Protein snakeskin.